Here is an 80-residue protein sequence, read N- to C-terminus: Defensin-like protein CAL1 (80 aa).

Residues Met1 to Ala31 form the signal peptide. 4 cysteine pairs are disulfide-bonded: Cys34-Cys80, Cys45-Cys65, Cys51-Cys74, and Cys55-Cys76.

Belongs to the DEFL family. In terms of tissue distribution, expressed preferentially in root exodermis and xylem parenchyma cells in vasculature of root and flag leaf sheath.

It is found in the secreted. Its subcellular location is the extracellular space. In terms of biological role, plant defensin-like protein involved in accumulation of cadmium (Cd) in rice leaves. Mediates Cd efflux from cytosol into extracellular spaces via chelation. This drives Cd secretion from xylem parenchyma cells into the xylem vessels, hence lowering Cd levels in cytosol meanwhile promoting Cd translocation from roots to shoots. The protein is Defensin-like protein CAL1 of Oryza sativa subsp. japonica (Rice).